A 500-amino-acid chain; its full sequence is Lysine--tRNA ligase (500 aa).

2 residues coordinate Mg(2+): Glu410 and Glu417.

This sequence belongs to the class-II aminoacyl-tRNA synthetase family. As to quaternary structure, homodimer. The cofactor is Mg(2+).

It is found in the cytoplasm. It carries out the reaction tRNA(Lys) + L-lysine + ATP = L-lysyl-tRNA(Lys) + AMP + diphosphate. The protein is Lysine--tRNA ligase of Shewanella loihica (strain ATCC BAA-1088 / PV-4).